Reading from the N-terminus, the 237-residue chain is Sensory rhodopsin-2 (237 aa).

Over 1–2 the chain is Extracellular; it reads MA. A helical transmembrane segment spans residues 3 to 23; it reads LTTWFWVGAVGMLAGTVLPIR. Residues 24–31 are Cytoplasmic-facing; it reads DCIRHPSH. The chain crosses the membrane as a helical span at residues 32 to 53; sequence RRYDLVLAGITGLAAIAYTTMG. Residues 54–67 are Extracellular-facing; the sequence is LGITATTVGDRTVY. The helical transmembrane segment at 68–89 threads the bilayer; sequence LARYIDWLVTTPLIVLYLAMLA. Residues 90 to 92 are Cytoplasmic-facing; sequence RPG. Residues 93–115 form a helical membrane-spanning segment; it reads HRTSAWLLAADVFVIAAGIAAAL. The Extracellular segment spans residues 116 to 119; sequence TTGV. The chain crosses the membrane as a helical span at residues 120 to 147; sequence QRWLFFAVGAAGYAALLYGLLGTLPRAL. Over 148–150 the chain is Cytoplasmic; sequence GDD. A helical membrane pass occupies residues 151-178; that stretch reads PRVRSLFVTLRNITVVLWTLYPVVWLLS. Residues 179 to 186 lie on the Extracellular side of the membrane; the sequence is PAGIGILQ. Residues 187–214 form a helical membrane-spanning segment; that stretch reads TEMYTIVVVYLDFISKVAFVAFAVLGAD. Residue lysine 202 is modified to N6-(retinylidene)lysine. Residues 215–237 are Cytoplasmic-facing; that stretch reads AVSRLVAADAAAPATAEPTPDGD.

This sequence belongs to the archaeal/bacterial/fungal opsin family. In terms of assembly, interacts with HTR-II.

It is found in the cell membrane. Functionally, photophobic photoreceptor responsible for the negative phototaxis. Activates the sensory rhodopsin II transducer (HTR-II) in response to blue light. The protein is Sensory rhodopsin-2 (sop2) of Halobacterium salinarum (strain ATCC 700922 / JCM 11081 / NRC-1) (Halobacterium halobium).